A 103-amino-acid polypeptide reads, in one-letter code: Somatostatin-2 (103 aa).

The signal sequence occupies residues 1–21; that stretch reads MLGSAGTLLLLLLAWGARALS. Positions 22-87 are excised as a propeptide; it reads QPDDNRITTG…VKFPRLSLRE (66 aa). A disulfide bond links Cys92 and Cys103.

The protein belongs to the somatostatin family.

The protein localises to the secreted. Its function is as follows. Somatostatin inhibits the release of somatotropin. The chain is Somatostatin-2 (sst2) from Pelophylax ridibundus (Marsh frog).